Consider the following 403-residue polypeptide: Deubiquitinase and deneddylase Dub1 (403 aa).

Polar residues predominate over residues 1 to 11; sequence MLSPTNSTSKT. The segment at 1-24 is disordered; it reads MLSPTNSTSKTAPVPPRDSSKPVL. A helical membrane pass occupies residues 40 to 60; it reads TALAVLLVVVTLGLILLFYSF. The interval 77-132 is disordered; the sequence is KEQPTISIPVPLPSPPLAVPRPSTPPAPTPAISRPSTPSAPKPSTPPPLLPKAPKP. Pro residues-rich tracts occupy residues 86-105 and 114-130; these read VPLP…PAPT and PSAP…PKAP. Residues His277, Asp294, and Cys347 contribute to the active site.

It belongs to the peptidase C48 family.

It is found in the secreted. The protein resides in the host cell. Its subcellular location is the membrane. Effector proteins function to alter host cell physiology and promote bacterial survival in host tissues. This protease possesses deubiquitinating and deneddylating activities. The polypeptide is Deubiquitinase and deneddylase Dub1 (cdu1) (Chlamydia trachomatis serovar L2b (strain UCH-1/proctitis)).